The chain runs to 96 residues: Small ribosomal subunit protein bS21 (96 aa).

The span at 37 to 52 shows a compositional bias: basic and acidic residues; that stretch reads EKPSEKKAREKAEAVR. Residues 37–96 are disordered; that stretch reads EKPSEKKAREKAEAVRRARKLARKKLQREGLLPSKPKPVFGADRGRGAAGGAGGAPRPAR. Residues 53–62 show a composition bias toward basic residues; the sequence is RARKLARKKL.

This sequence belongs to the bacterial ribosomal protein bS21 family.

The sequence is that of Small ribosomal subunit protein bS21 from Afipia carboxidovorans (strain ATCC 49405 / DSM 1227 / KCTC 32145 / OM5) (Oligotropha carboxidovorans).